Consider the following 271-residue polypeptide: Proteasome inhibitor PI31 subunit (271 aa).

An N-acetylalanine modification is found at Ala-2. Residues 2–150 form an important for homodimerization and interaction with FBXO7 region; it reads AGLEVLFASA…PIHEQWEKAN (149 aa). A Phosphoserine modification is found at Ser-153. Arg-205 bears the Omega-N-methylarginine mark. Arg-219 carries the asymmetric dimethylarginine modification. Positions 222 to 271 are disordered; the sequence is IDPSSGLPNRLPPGAVPPGARFDPFGPIGTSPPGPNPDHLPPPGYDDMYL. At Arg-231 the chain carries Omega-N-methylarginine. Positions 251–265 are enriched in pro residues; sequence TSPPGPNPDHLPPPG. Ser-252 carries the phosphoserine modification.

Belongs to the proteasome inhibitor PI31 family. Monomer and homodimer. Interacts with FBXO7.

It is found in the cytoplasm. Its subcellular location is the endoplasmic reticulum. Functionally, plays an important role in control of proteasome function. Inhibits the hydrolysis of protein and peptide substrates by the 20S proteasome. Also inhibits the activation of the proteasome by the proteasome regulatory proteins PA700 and PA28. The polypeptide is Proteasome inhibitor PI31 subunit (PSMF1) (Pongo abelii (Sumatran orangutan)).